An 82-amino-acid polypeptide reads, in one-letter code: uncharacterized protein (82 aa).

2 consecutive transmembrane segments (helical) span residues 8–28 and 50–70; these read LLSA…LPAP and LYTV…YLVL.

It is found in the cell membrane. This is an uncharacterized protein from Klebsiella pneumoniae.